The primary structure comprises 156 residues: Arginine repressor (156 aa).

This sequence belongs to the ArgR family.

The protein localises to the cytoplasm. It functions in the pathway amino-acid biosynthesis; L-arginine biosynthesis [regulation]. Regulates arginine biosynthesis genes. This chain is Arginine repressor, found in Shewanella halifaxensis (strain HAW-EB4).